We begin with the raw amino-acid sequence, 153 residues long: Putative transmembrane protein INAFM2 (153 aa).

Positions 1–23 are enriched in basic and acidic residues; that stretch reads MKERDAAPAERGKPATYTGDKKA. The disordered stretch occupies residues 1 to 24; it reads MKERDAAPAERGKPATYTGDKKAK. A helical transmembrane segment spans residues 36-56; that stretch reads LATVFAYVLSVSLAAIVLAVY. Residues 66-153 are disordered; sequence AGTSGGAAGP…EETAAAPGSR (88 aa). Positions 79–101 are enriched in low complexity; the sequence is GSNATGPSGTSGAAAAGPNTTGS. A compositionally biased stretch (pro residues) spans 118–131; that stretch reads PAPPEPPADSPPAG.

The protein localises to the membrane. The chain is Putative transmembrane protein INAFM2 from Homo sapiens (Human).